The primary structure comprises 446 residues: Glutamyl-tRNA reductase 2 (446 aa).

Residues 53–56 (TCNR), Ser-105, 110–112 (EQQ), and Gln-116 each bind substrate. Cys-54 functions as the Nucleophile in the catalytic mechanism. 185–190 (GAGKMG) provides a ligand contact to NADP(+). Residues 409–446 (AAELFGIENETAGGERREGGAEGAAAAPGAGPVRSQGT) are disordered. The segment covering 431–440 (GAAAAPGAGP) has biased composition (low complexity).

The protein belongs to the glutamyl-tRNA reductase family. Homodimer.

It carries out the reaction (S)-4-amino-5-oxopentanoate + tRNA(Glu) + NADP(+) = L-glutamyl-tRNA(Glu) + NADPH + H(+). Its pathway is porphyrin-containing compound metabolism; protoporphyrin-IX biosynthesis; 5-aminolevulinate from L-glutamyl-tRNA(Glu): step 1/2. Functionally, catalyzes the NADPH-dependent reduction of glutamyl-tRNA(Glu) to glutamate 1-semialdehyde (GSA). This is Glutamyl-tRNA reductase 2 from Anaeromyxobacter dehalogenans (strain 2CP-C).